The following is a 135-amino-acid chain: ATP synthase epsilon chain (135 aa).

Belongs to the ATPase epsilon chain family. In terms of assembly, F-type ATPases have 2 components, CF(1) - the catalytic core - and CF(0) - the membrane proton channel. CF(1) has five subunits: alpha(3), beta(3), gamma(1), delta(1), epsilon(1). CF(0) has three main subunits: a, b and c.

The protein localises to the cell inner membrane. Functionally, produces ATP from ADP in the presence of a proton gradient across the membrane. This chain is ATP synthase epsilon chain, found in Bradyrhizobium sp. (strain ORS 278).